Here is a 505-residue protein sequence, read N- to C-terminus: Lysine--tRNA ligase (505 aa).

Positions 415 and 422 each coordinate Mg(2+).

It belongs to the class-II aminoacyl-tRNA synthetase family. As to quaternary structure, homodimer. Mg(2+) is required as a cofactor.

The protein localises to the cytoplasm. It carries out the reaction tRNA(Lys) + L-lysine + ATP = L-lysyl-tRNA(Lys) + AMP + diphosphate. In Yersinia enterocolitica serotype O:8 / biotype 1B (strain NCTC 13174 / 8081), this protein is Lysine--tRNA ligase.